Here is a 343-residue protein sequence, read N- to C-terminus: tRNA N6-adenosine threonylcarbamoyltransferase (343 aa).

Positions 120 and 124 each coordinate Fe cation. Substrate-binding positions include 142 to 146, Asp175, Gly188, Asp192, and Asn281; that span reads VVSGG. Asp310 serves as a coordination point for Fe cation.

This sequence belongs to the KAE1 / TsaD family. Requires Fe(2+) as cofactor.

It is found in the cytoplasm. The catalysed reaction is L-threonylcarbamoyladenylate + adenosine(37) in tRNA = N(6)-L-threonylcarbamoyladenosine(37) in tRNA + AMP + H(+). Required for the formation of a threonylcarbamoyl group on adenosine at position 37 (t(6)A37) in tRNAs that read codons beginning with adenine. Is involved in the transfer of the threonylcarbamoyl moiety of threonylcarbamoyl-AMP (TC-AMP) to the N6 group of A37, together with TsaE and TsaB. TsaD likely plays a direct catalytic role in this reaction. This Bacillus cereus (strain ATCC 10987 / NRS 248) protein is tRNA N6-adenosine threonylcarbamoyltransferase.